The chain runs to 469 residues: Argininosuccinate lyase (469 aa).

Belongs to the lyase 1 family. Argininosuccinate lyase subfamily.

The protein localises to the cytoplasm. The catalysed reaction is 2-(N(omega)-L-arginino)succinate = fumarate + L-arginine. Its pathway is amino-acid biosynthesis; L-arginine biosynthesis; L-arginine from L-ornithine and carbamoyl phosphate: step 3/3. The sequence is that of Argininosuccinate lyase from Saccharophagus degradans (strain 2-40 / ATCC 43961 / DSM 17024).